The primary structure comprises 569 residues: Potassium-transporting ATPase potassium-binding subunit (569 aa).

Transmembrane regions (helical) follow at residues 3-23, 64-84, 133-153, 179-199, 255-275, 281-301, 375-395, 421-441, 497-517, and 535-555; these read TEILGVALQILLLLVISYPLG, FLKSLLIINVFWFFWGMILLV, FVIMLFQFITAATGMAAMAGI, ILFPMSLIVGFILIIQGTPMG, IVECWSILIIPMALVFALGFY, LGYVIYGVMLFAYLLGVFCNV, FGGVGVGFMNYYAFLIIAVFI, IVSLAHPFVILIFTAISSYVW, LALIISRYLPIVGQVAIAGLL, and VTFGVMTFFVIVIVAALSFFP.

This sequence belongs to the KdpA family. In terms of assembly, the system is composed of three essential subunits: KdpA, KdpB and KdpC.

The protein localises to the cell inner membrane. Part of the high-affinity ATP-driven potassium transport (or Kdp) system, which catalyzes the hydrolysis of ATP coupled with the electrogenic transport of potassium into the cytoplasm. This subunit binds the periplasmic potassium ions and delivers the ions to the membrane domain of KdpB through an intramembrane tunnel. The chain is Potassium-transporting ATPase potassium-binding subunit from Parabacteroides distasonis (strain ATCC 8503 / DSM 20701 / CIP 104284 / JCM 5825 / NCTC 11152).